The following is a 684-amino-acid chain: Macrolide export ATP-binding/permease protein MacB (684 aa).

Residues 2 to 243 form the ABC transporter domain; the sequence is IQLYGLRKDY…RSRLANSRAE (242 aa). 38–45 lines the ATP pocket; it reads GSSGSGKT. The next 5 membrane-spanning stretches (helical) occupy residues 248–268, 275–295, 563–583, 615–635, and 644–664; these read PASA…VLAL, TVLT…TMEL, LVIA…IMLV, VLCV…SVLV, and AMSI…GIVF.

Belongs to the ABC transporter superfamily. Macrolide exporter (TC 3.A.1.122) family. In terms of assembly, homodimer.

Its subcellular location is the cell inner membrane. Non-canonical ABC transporter that contains transmembrane domains (TMD), which form a pore in the inner membrane, and an ATP-binding domain (NBD), which is responsible for energy generation. Confers resistance against macrolides. The polypeptide is Macrolide export ATP-binding/permease protein MacB (Rhodopirellula baltica (strain DSM 10527 / NCIMB 13988 / SH1)).